The sequence spans 76 residues: MTDVESTYADFIASGRTGRRNALHDILVSSPGGNSSELALKLSELDINKAEGEGDAQRNPSEQTGEAQGEAAKQES.

Residue Thr-2 is modified to Blocked amino end (Thr). The tract at residues 49–76 (KAEGEGDAQRNPSEQTGEAQGEAAKQES) is disordered.

It belongs to the PKI family.

Functionally, extremely potent competitive inhibitor of cAMP-dependent protein kinase activity, this protein interacts with the catalytic subunit of the enzyme after the cAMP-induced dissociation of its regulatory chains. In Gallus gallus (Chicken), this protein is cAMP-dependent protein kinase inhibitor alpha (PKIA).